The following is a 206-amino-acid chain: Small ribosomal subunit protein uS4 (206 aa).

One can recognise an S4 RNA-binding domain in the interval 96–156; it reads CRLDNVVYRM…EKAKNQLRIA (61 aa).

Belongs to the universal ribosomal protein uS4 family. As to quaternary structure, part of the 30S ribosomal subunit. Contacts protein S5. The interaction surface between S4 and S5 is involved in control of translational fidelity.

Its function is as follows. One of the primary rRNA binding proteins, it binds directly to 16S rRNA where it nucleates assembly of the body of the 30S subunit. Functionally, with S5 and S12 plays an important role in translational accuracy. The protein is Small ribosomal subunit protein uS4 of Azotobacter vinelandii (strain DJ / ATCC BAA-1303).